A 334-amino-acid polypeptide reads, in one-letter code: Protein-methionine-sulfoxide reductase catalytic subunit MsrP (334 aa).

Positions 1 to 44 form a signal peptide, tat-type signal; the sequence is MKKNQFLKESDVTAESVFFMTRRQVLKALGISAAALSLPHAAHA. Mo-molybdopterin contacts are provided by residues Asn-88, 91–92, Cys-146, Thr-181, Asn-233, Arg-238, and 249–251; these read YE and GIK.

This sequence belongs to the MsrP family. In terms of assembly, heterodimer of a catalytic subunit (MsrP) and a heme-binding subunit (MsrQ). Mo-molybdopterin is required as a cofactor. In terms of processing, predicted to be exported by the Tat system. The position of the signal peptide cleavage has not been experimentally proven.

It localises to the periplasm. It catalyses the reaction L-methionyl-[protein] + a quinone + H2O = L-methionyl-(S)-S-oxide-[protein] + a quinol. The enzyme catalyses L-methionyl-[protein] + a quinone + H2O = L-methionyl-(R)-S-oxide-[protein] + a quinol. Functionally, part of the MsrPQ system that repairs oxidized periplasmic proteins containing methionine sulfoxide residues (Met-O), using respiratory chain electrons. Thus protects these proteins from oxidative-stress damage caused by reactive species of oxygen and chlorine generated by the host defense mechanisms. MsrPQ is essential for the maintenance of envelope integrity under bleach stress, rescuing a wide series of structurally unrelated periplasmic proteins from methionine oxidation, including the primary periplasmic chaperone SurA and the lipoprotein Pal. The catalytic subunit MsrP is non-stereospecific, being able to reduce both (R-) and (S-) diastereoisomers of methionine sulfoxide. This Escherichia coli (strain 55989 / EAEC) protein is Protein-methionine-sulfoxide reductase catalytic subunit MsrP.